Here is a 189-residue protein sequence, read N- to C-terminus: Interferon alpha-6 (189 aa).

The N-terminal stretch at 1-23 (MARLCAFLMVLAVLSYWPTCSLG) is a signal peptide. Disulfide bonds link cysteine 24/cysteine 122 and cysteine 52/cysteine 162. An N-linked (GlcNAc...) asparagine glycan is attached at asparagine 101.

This sequence belongs to the alpha/beta interferon family.

It localises to the secreted. Its function is as follows. Produced by macrophages, IFN-alpha have antiviral activities. Interferon stimulates the production of two enzymes: a protein kinase and an oligoadenylate synthetase. The protein is Interferon alpha-6 (Ifna6) of Mus musculus (Mouse).